We begin with the raw amino-acid sequence, 295 residues long: Protoheme IX farnesyltransferase (295 aa).

Transmembrane regions (helical) follow at residues 7-27 (VTKP…FLLA), 34-54 (VPLF…GCVF), 78-98 (LIAP…GIAL), 106-126 (LAAL…SLYM), 131-151 (VYGT…GYCA), 161-181 (LILL…IAIF), 207-227 (ITLY…GGYA), 228-248 (GYKY…MALS), and 263-283 (LFMF…VDFQ).

The protein belongs to the UbiA prenyltransferase family. Protoheme IX farnesyltransferase subfamily.

It is found in the cell inner membrane. It carries out the reaction heme b + (2E,6E)-farnesyl diphosphate + H2O = Fe(II)-heme o + diphosphate. The protein operates within porphyrin-containing compound metabolism; heme O biosynthesis; heme O from protoheme: step 1/1. Converts heme B (protoheme IX) to heme O by substitution of the vinyl group on carbon 2 of heme B porphyrin ring with a hydroxyethyl farnesyl side group. The sequence is that of Protoheme IX farnesyltransferase from Aeromonas salmonicida (strain A449).